We begin with the raw amino-acid sequence, 250 residues long: Proteasome subunit alpha type-7-A (250 aa).

A Glycyl lysine isopeptide (Lys-Gly) (interchain with G-Cter in ubiquitin) cross-link involves residue Lys62.

This sequence belongs to the peptidase T1A family. As to quaternary structure, component of the 20S core complex of the 26S proteasome. The 26S proteasome is composed of a core protease (CP), known as the 20S proteasome, capped at one or both ends by the 19S regulatory particle (RP/PA700). The 20S proteasome core is composed of 28 subunits that are arranged in four stacked rings, resulting in a barrel-shaped structure. The two end rings are each formed by seven alpha subunits, and the two central rings are each formed by seven beta subunits. The catalytic chamber with the active sites is on the inside of the barrel. Interacts with KIN10 and KIN11 SnRK subunits, and with the SKP1A/ASK1 subunit of the SCF E3 ubiquitin ligase complex. Expressed in roots, leaves and flowers.

The protein resides in the cytoplasm. It localises to the nucleus. Its function is as follows. The proteasome is a multicatalytic proteinase complex which is characterized by its ability to cleave peptides with Arg, Phe, Tyr, Leu, and Glu adjacent to the leaving group at neutral or slightly basic pH. The proteasome has an ATP-dependent proteolytic activity. Mediates the association of the SCF(TIR1) E3 ubiquitin ligase complex with the proteasome. This chain is Proteasome subunit alpha type-7-A (PAD1), found in Arabidopsis thaliana (Mouse-ear cress).